We begin with the raw amino-acid sequence, 113 residues long: ECORI-T site protein ETM (113 aa).

The chain is ECORI-T site protein ETM (ETM) from Autographa californica nuclear polyhedrosis virus (AcMNPV).